The chain runs to 513 residues: MKRDLVLVIDFGGQYNQLIARRVRECNVYCEVHPYNLSVDEIKQMNPKGIIFTGGPNSVYGENSPLCDKAIFELGVPIFGICYGSQLMSHILGGKVATAPVSEYGKTKVDVNIESKLFEGVSSSTICWMSHTDYIEKAPEEFKVIGNTPVCPVAAMECEDKNLYAVQFHPEVMHTEEGTKMLSNFVYNICGCTGDWKMDSFVEKTIEEVRQKVGNGKVLCALSGGVDSSVAAVLLSRAVGKQLTCVFVDHGLLRKNEGDEVEEIFGPNGQYDLNFIRVNAQERFYEKLAGIEEPEQKRKIIGEEFIRVFEEEAKKIGTVDYLVQGTIYPDVIESGLGKSAVIKSHHNVGGLPDYVDFKEIIEPLRLLFKDEVRKAGLELGIPEKLVFRQPFPGPGLGIRIIGEVTAEKVKIVQDADAIYREEIANAGIDKEIGQYFAALTNMRSVGVMGDERTYDYAIALRAVTTSDFMTAESADLPWEVLGKVTTRIVNEVKGVNRVMYDCTGKPPATIEFE.

The Glutamine amidotransferase type-1 domain occupies 5–195; that stretch reads LVLVIDFGGQ…VYNICGCTGD (191 aa). The active-site Nucleophile is the C82. Catalysis depends on residues H169 and E171. The GMPS ATP-PPase domain occupies 196-388; that stretch reads WKMDSFVEKT…LGIPEKLVFR (193 aa). 223–229 provides a ligand contact to ATP; sequence SGGVDSS.

In terms of assembly, homodimer.

It catalyses the reaction XMP + L-glutamine + ATP + H2O = GMP + L-glutamate + AMP + diphosphate + 2 H(+). The protein operates within purine metabolism; GMP biosynthesis; GMP from XMP (L-Gln route): step 1/1. Its function is as follows. Catalyzes the synthesis of GMP from XMP. The sequence is that of GMP synthase [glutamine-hydrolyzing] from Clostridium botulinum (strain Eklund 17B / Type B).